The following is a 77-amino-acid chain: Large ribosomal subunit protein bL28 (77 aa).

It belongs to the bacterial ribosomal protein bL28 family.

The sequence is that of Large ribosomal subunit protein bL28 from Delftia acidovorans (strain DSM 14801 / SPH-1).